Consider the following 701-residue polypeptide: Capsid protein VP1 (701 aa).

This sequence belongs to the caliciviridae capsid protein family. As to quaternary structure, homodimer. Homomultimer. Interacts with the minor capsid protein VP2. May bind to VP3 and Vpg proteins. Post-translationally, cleaved by the viral protease to produce mature capsid protein.

Its subcellular location is the virion. It localises to the host cytoplasm. Its function is as follows. Capsid protein self assembles to form an icosahedral capsid with a T=3 symmetry, about 38 nm in diameter, and consisting of 180 capsid proteins. A smaller form of capsid with a diameter of 23 nm might be capsid proteins assembled as icosahedron with T=1 symmetry. The capsid encapsulates the genomic RNA and is decorated with VP2 proteins. The protein is Capsid protein VP1 of Vesicular exanthema of swine virus serotype A48 (isolate Swine/United States/A48/1948) (VESV).